A 465-amino-acid polypeptide reads, in one-letter code: ATP synthase subunit beta (465 aa).

148–155 serves as a coordination point for ATP; it reads GGAGVGKT.

It belongs to the ATPase alpha/beta chains family. In terms of assembly, F-type ATPases have 2 components, CF(1) - the catalytic core - and CF(0) - the membrane proton channel. CF(1) has five subunits: alpha(3), beta(3), gamma(1), delta(1), epsilon(1). CF(0) has three main subunits: a(1), b(2) and c(9-12). The alpha and beta chains form an alternating ring which encloses part of the gamma chain. CF(1) is attached to CF(0) by a central stalk formed by the gamma and epsilon chains, while a peripheral stalk is formed by the delta and b chains.

It localises to the cell inner membrane. The enzyme catalyses ATP + H2O + 4 H(+)(in) = ADP + phosphate + 5 H(+)(out). Functionally, produces ATP from ADP in the presence of a proton gradient across the membrane. The catalytic sites are hosted primarily by the beta subunits. This chain is ATP synthase subunit beta, found in Neisseria meningitidis serogroup A / serotype 4A (strain DSM 15465 / Z2491).